The following is a 376-amino-acid chain: Succinyl-diaminopimelate desuccinylase (376 aa).

H66 lines the Zn(2+) pocket. The active site involves D68. D99 lines the Zn(2+) pocket. E133 (proton acceptor) is an active-site residue. E134, E162, and H349 together coordinate Zn(2+).

Belongs to the peptidase M20A family. DapE subfamily. Homodimer. Requires Zn(2+) as cofactor. The cofactor is Co(2+).

It catalyses the reaction N-succinyl-(2S,6S)-2,6-diaminopimelate + H2O = (2S,6S)-2,6-diaminopimelate + succinate. Its pathway is amino-acid biosynthesis; L-lysine biosynthesis via DAP pathway; LL-2,6-diaminopimelate from (S)-tetrahydrodipicolinate (succinylase route): step 3/3. Catalyzes the hydrolysis of N-succinyl-L,L-diaminopimelic acid (SDAP), forming succinate and LL-2,6-diaminopimelate (DAP), an intermediate involved in the bacterial biosynthesis of lysine and meso-diaminopimelic acid, an essential component of bacterial cell walls. This Buchnera aphidicola subsp. Cinara cedri (strain Cc) protein is Succinyl-diaminopimelate desuccinylase.